Consider the following 425-residue polypeptide: Cysteate synthase (425 aa).

An N6-(pyridoxal phosphate)lysine modification is found at Lys106. Residues Asn132 and Thr382 each coordinate pyridoxal 5'-phosphate.

It belongs to the threonine synthase family. Cysteate synthase subfamily. In terms of assembly, homotrimer. Requires pyridoxal 5'-phosphate as cofactor.

It carries out the reaction O-phospho-L-serine + sulfite + H(+) = L-cysteate + phosphate. Its pathway is cofactor biosynthesis; coenzyme M biosynthesis. Functionally, specifically catalyzes the beta-elimination of phosphate from L-phosphoserine and the beta-addition of sulfite to the dehydroalanine intermediate to produce L-cysteate. This Methanosphaerula palustris (strain ATCC BAA-1556 / DSM 19958 / E1-9c) protein is Cysteate synthase.